We begin with the raw amino-acid sequence, 655 residues long: Broad substrate specificity ATP-binding cassette transporter ABCG2 (655 aa).

Topologically, residues 1 to 395 are cytoplasmic; it reads MSSSNVEVFI…KNLLGNPQAS (395 aa). The 250-residue stretch at 37-286 folds into the ABC transporter domain; sequence LSFHNICYRV…FESAGYHCEA (250 aa). ATP contacts are provided by residues 80–87, 184–190, glutamate 211, and histidine 243; these read GPTGGGKS and RGVSGGE. The residue at position 362 (threonine 362) is a Phosphothreonine; by PIM1. The 263-residue stretch at 389–651 folds into the ABC transmembrane type-2 domain; sequence LGNPQASIAQ…TIAYLKLLFL (263 aa). A helical transmembrane segment spans residues 396 to 416; sequence IAQIIVTVVLGLVIGAIYFGL. At 417 to 428 the chain is on the extracellular side; the sequence is KNDSTGIQNRAG. Residues 429–449 form a helical membrane-spanning segment; sequence VLFFLTTNQCFSSVSAVELFV. At 450-477 the chain is on the cytoplasmic side; that stretch reads VEKKLFIHEYISGYYRVSSYFLGKLLSD. The chain crosses the membrane as a helical span at residues 478–498; sequence LLPMRMLPSIIFTCIVYFMLG. At 499 to 506 the chain is on the extracellular side; it reads LKPKADAF. A helical transmembrane segment spans residues 507-527; it reads FVMMFTLMMVAYSASSMALAI. Residues 528-535 are Cytoplasmic-facing; it reads AAGQSVVS. Residues 536–556 traverse the membrane as a helical segment; it reads VATLLMTICFVFMMIFSGLLV. The Extracellular segment spans residues 557–630; the sequence is NLTTIASWLS…LSPWGLWKNH (74 aa). The cysteines at positions 592 and 608 are disulfide-linked. An N-linked (GlcNAc...) asparagine glycan is attached at asparagine 596. Residues 631–651 form a helical membrane-spanning segment; that stretch reads VALACMIVIFLTIAYLKLLFL. Over 652–655 the chain is Cytoplasmic; that stretch reads KKYS.

Belongs to the ABC transporter superfamily. ABCG family. Eye pigment precursor importer (TC 3.A.1.204) subfamily. As to quaternary structure, homodimer; disulfide-linked. The minimal functional unit is a homodimer, but the major oligomeric form in plasma membrane is a homotetramer with possibility of higher order oligomerization up to homododecamers. In terms of processing, N-glycosylated. Glycosylation-deficient ABCG2 is normally expressed and functional. Phosphorylated. Phosphorylation at Thr-362 by PIM1 is induced by drugs like mitoxantrone and is associated with cells increased drug resistance. It regulates the localization to the plasma membrane, the homooligomerization and therefore, the activity of the transporter. As to expression, highly expressed in placenta. Low expression in small intestine, liver and colon. Expressed in brain (at protein level).

It localises to the cell membrane. Its subcellular location is the apical cell membrane. The protein localises to the mitochondrion membrane. It carries out the reaction ATP + H2O + xenobioticSide 1 = ADP + phosphate + xenobioticSide 2.. It catalyses the reaction urate(in) + ATP + H2O = urate(out) + ADP + phosphate + H(+). The catalysed reaction is indoxyl sulfate(in) + ATP + H2O = indoxyl sulfate(out) + ADP + phosphate + H(+). The enzyme catalyses sphing-4-enine 1-phosphate(in) + ATP + H2O = sphing-4-enine 1-phosphate(out) + ADP + phosphate + H(+). It carries out the reaction estrone 3-sulfate(in) + ATP + H2O = estrone 3-sulfate(out) + ADP + phosphate + H(+). It catalyses the reaction dehydroepiandrosterone 3-sulfate(in) + ATP + H2O = dehydroepiandrosterone 3-sulfate(out) + ADP + phosphate + H(+). The catalysed reaction is 4-methylumbelliferone sulfate(in) + ATP + H2O = 4-methylumbelliferone sulfate(out) + ADP + phosphate + H(+). The enzyme catalyses 5,7-dimethyl-2-methylamino-4-(3-pyridylmethyl)-1,3-benzothiazol-6-yl beta-D-glucuronate(in) + ATP + H2O = 5,7-dimethyl-2-methylamino-4-(3-pyridylmethyl)-1,3-benzothiazol-6-yl beta-D-glucuronate(out) + ADP + phosphate + H(+). It carries out the reaction 4-methylumbelliferone beta-D-glucuronate(in) + ATP + H2O = 4-methylumbelliferone beta-D-glucuronate(out) + ADP + phosphate + H(+). It catalyses the reaction 5,7-dimethyl-2-methylamino-4-(3-pyridylmethyl)-1,3-benzothiazol-6-yl sulfate(in) + ATP + H2O = 5,7-dimethyl-2-methylamino-4-(3-pyridylmethyl)-1,3-benzothiazol-6-yl sulfate(out) + ADP + phosphate + H(+). The catalysed reaction is 17beta-estradiol 17-O-(beta-D-glucuronate)(in) + ATP + H2O = 17beta-estradiol 17-O-(beta-D-glucuronate)(out) + ADP + phosphate + H(+). The enzyme catalyses methotrexate(in) + ATP + H2O = methotrexate(out) + ADP + phosphate + H(+). It carries out the reaction riboflavin(in) + ATP + H2O = riboflavin(out) + ADP + phosphate + H(+). It catalyses the reaction pheophorbide a(in) + ATP + H2O = pheophorbide a(out) + ADP + phosphate + H(+). The catalysed reaction is itaconate(in) + ATP + H2O = itaconate(out) + ADP + phosphate + H(+). With respect to regulation, specifically inhibited by the fungal toxin fumitremorgin C and Ko143. In terms of biological role, broad substrate specificity ATP-dependent transporter of the ATP-binding cassette (ABC) family that actively extrudes a wide variety of physiological compounds, dietary toxins and xenobiotics from cells. Involved in porphyrin homeostasis, mediating the export of protoporphyrin IX (PPIX) from both mitochondria to cytosol and cytosol to extracellular space, it also functions in the cellular export of heme. Also mediates the efflux of sphingosine-1-P from cells. Acts as a urate exporter functioning in both renal and extrarenal urate excretion. In kidney, it also functions as a physiological exporter of the uremic toxin indoxyl sulfate. Also involved in the excretion of steroids like estrone 3-sulfate/E1S, 3beta-sulfooxy-androst-5-en-17-one/DHEAS, and other sulfate conjugates. Mediates the secretion of the riboflavin and biotin vitamins into milk. Extrudes pheophorbide a, a phototoxic porphyrin catabolite of chlorophyll, reducing its bioavailability. Plays an important role in the exclusion of xenobiotics from the brain. It confers to cells a resistance to multiple drugs and other xenobiotics including mitoxantrone, pheophorbide, camptothecin, methotrexate, azidothymidine, and the anthracyclines daunorubicin and doxorubicin, through the control of their efflux. In placenta, it limits the penetration of drugs from the maternal plasma into the fetus. May play a role in early stem cell self-renewal by blocking differentiation. In inflammatory macrophages, exports itaconate from the cytosol to the extracellular compartment and limits the activation of TFEB-dependent lysosome biogenesis involved in antibacterial innate immune response. The polypeptide is Broad substrate specificity ATP-binding cassette transporter ABCG2 (ABCG2) (Homo sapiens (Human)).